Consider the following 333-residue polypeptide: L-lactate dehydrogenase B chain (333 aa).

NAD(+) is bound by residues 29 to 57 and arginine 99; that span reads GQVG…LEDK. Substrate-binding residues include arginine 106, asparagine 138, and arginine 169. Residue asparagine 138 coordinates NAD(+). Histidine 193 serves as the catalytic Proton acceptor. A substrate-binding site is contributed by threonine 248.

This sequence belongs to the LDH/MDH superfamily. LDH family. Homotetramer.

It localises to the cytoplasm. It catalyses the reaction (S)-lactate + NAD(+) = pyruvate + NADH + H(+). It functions in the pathway fermentation; pyruvate fermentation to lactate; (S)-lactate from pyruvate: step 1/1. Functionally, interconverts simultaneously and stereospecifically pyruvate and lactate with concomitant interconversion of NADH and NAD(+). The chain is L-lactate dehydrogenase B chain (LDHB) from Caiman crocodilus apaporiensis (Rio Apaporis caiman).